Reading from the N-terminus, the 408-residue chain is Arginine biosynthesis bifunctional protein ArgJ (408 aa).

6 residues coordinate substrate: T162, K188, T199, E280, N403, and S408. The active-site Nucleophile is T199.

This sequence belongs to the ArgJ family. As to quaternary structure, heterotetramer of two alpha and two beta chains.

It is found in the cytoplasm. It carries out the reaction N(2)-acetyl-L-ornithine + L-glutamate = N-acetyl-L-glutamate + L-ornithine. The catalysed reaction is L-glutamate + acetyl-CoA = N-acetyl-L-glutamate + CoA + H(+). It functions in the pathway amino-acid biosynthesis; L-arginine biosynthesis; L-ornithine and N-acetyl-L-glutamate from L-glutamate and N(2)-acetyl-L-ornithine (cyclic): step 1/1. Its pathway is amino-acid biosynthesis; L-arginine biosynthesis; N(2)-acetyl-L-ornithine from L-glutamate: step 1/4. Its function is as follows. Catalyzes two activities which are involved in the cyclic version of arginine biosynthesis: the synthesis of N-acetylglutamate from glutamate and acetyl-CoA as the acetyl donor, and of ornithine by transacetylation between N(2)-acetylornithine and glutamate. The polypeptide is Arginine biosynthesis bifunctional protein ArgJ (Ruegeria pomeroyi (strain ATCC 700808 / DSM 15171 / DSS-3) (Silicibacter pomeroyi)).